Reading from the N-terminus, the 504-residue chain is UDP-N-acetylmuramoylalanine--D-glutamate ligase (504 aa).

132-138 (GTNGKTT) is an ATP binding site. Residues 284-310 (AQDRDATDEPAPTRRRKSESTAPPDIG) form a disordered region.

It belongs to the MurCDEF family.

The protein localises to the cytoplasm. It catalyses the reaction UDP-N-acetyl-alpha-D-muramoyl-L-alanine + D-glutamate + ATP = UDP-N-acetyl-alpha-D-muramoyl-L-alanyl-D-glutamate + ADP + phosphate + H(+). The protein operates within cell wall biogenesis; peptidoglycan biosynthesis. In terms of biological role, cell wall formation. Catalyzes the addition of glutamate to the nucleotide precursor UDP-N-acetylmuramoyl-L-alanine (UMA). This chain is UDP-N-acetylmuramoylalanine--D-glutamate ligase, found in Paraburkholderia phymatum (strain DSM 17167 / CIP 108236 / LMG 21445 / STM815) (Burkholderia phymatum).